The primary structure comprises 408 residues: Argininosuccinate synthase (408 aa).

Position 8 to 16 (8 to 16 (AYSGGLDTT)) interacts with ATP. Y86 lines the L-citrulline pocket. Residue G116 participates in ATP binding. L-aspartate-binding residues include T118, N122, and D123. N122 lines the L-citrulline pocket. L-citrulline is bound by residues R126, S177, S186, E263, and Y275.

This sequence belongs to the argininosuccinate synthase family. Type 1 subfamily. In terms of assembly, homotetramer.

The protein resides in the cytoplasm. The catalysed reaction is L-citrulline + L-aspartate + ATP = 2-(N(omega)-L-arginino)succinate + AMP + diphosphate + H(+). It participates in amino-acid biosynthesis; L-arginine biosynthesis; L-arginine from L-ornithine and carbamoyl phosphate: step 2/3. The polypeptide is Argininosuccinate synthase (Agathobacter rectalis (strain ATCC 33656 / DSM 3377 / JCM 17463 / KCTC 5835 / VPI 0990) (Eubacterium rectale)).